We begin with the raw amino-acid sequence, 295 residues long: Protease HtpX (295 aa).

2 consecutive transmembrane segments (helical) span residues Ile-4–Leu-24 and Ser-41–Ile-61. Residue His-147 coordinates Zn(2+). The active site involves Glu-148. His-151 serves as a coordination point for Zn(2+). A run of 2 helical transmembrane segments spans residues Val-158–Ile-178 and Val-199–Phe-219. Glu-224 is a Zn(2+) binding site.

Belongs to the peptidase M48B family. Zn(2+) is required as a cofactor.

The protein localises to the cell inner membrane. This is Protease HtpX from Pseudomonas putida (strain ATCC 47054 / DSM 6125 / CFBP 8728 / NCIMB 11950 / KT2440).